The primary structure comprises 95 residues: CRISPR-associated endoribonuclease Cas2 3 (95 aa).

Mg(2+) is bound at residue Asp-7.

This sequence belongs to the CRISPR-associated endoribonuclease Cas2 protein family. Homodimer, forms a heterotetramer with a Cas1 homodimer. Requires Mg(2+) as cofactor.

Its function is as follows. CRISPR (clustered regularly interspaced short palindromic repeat), is an adaptive immune system that provides protection against mobile genetic elements (viruses, transposable elements and conjugative plasmids). CRISPR clusters contain sequences complementary to antecedent mobile elements and target invading nucleic acids. CRISPR clusters are transcribed and processed into CRISPR RNA (crRNA). Functions as a ssRNA-specific endoribonuclease. Involved in the integration of spacer DNA into the CRISPR cassette. The chain is CRISPR-associated endoribonuclease Cas2 3 from Rhodospirillum rubrum (strain ATCC 11170 / ATH 1.1.1 / DSM 467 / LMG 4362 / NCIMB 8255 / S1).